A 761-amino-acid chain; its full sequence is Pleckstrin homology domain-containing family M member 3 (761 aa).

Ser-132 is subject to Phosphoserine. 2 PH domains span residues 211–308 (NILK…EVVH) and 361–456 (NILK…IAAN). The Phorbol-ester/DAG-type zinc finger occupies 669–722 (SHVYSCSLCSQKGFICEICNNGEILYPFEDISTSRCESCGAVFHSECKEKSVPC).

In terms of assembly, interacts with AKT1.

The protein resides in the cytoplasm. It is found in the golgi apparatus. The protein localises to the cell membrane. Its function is as follows. Involved in skeletal muscle differentiation. May act as a scaffold protein for AKT1 during muscle differentiation. This chain is Pleckstrin homology domain-containing family M member 3, found in Homo sapiens (Human).